The sequence spans 338 residues: Ketol-acid reductoisomerase (NADP(+)) (338 aa).

Positions 1–181 (MKVYYDKDAD…GGGRTGIIET (181 aa)) constitute a KARI N-terminal Rossmann domain. Residues 24-27 (YGSQ), R47, S50, S52, and 82-85 (DEFQ) each bind NADP(+). H107 is an active-site residue. G133 contacts NADP(+). A KARI C-terminal knotted domain is found at 182-327 (TFKDETETDL…AKLRSMMPWI (146 aa)). Residues D190, E194, E226, and E230 each contribute to the Mg(2+) site. S251 provides a ligand contact to substrate.

The protein belongs to the ketol-acid reductoisomerase family. Mg(2+) serves as cofactor.

The catalysed reaction is (2R)-2,3-dihydroxy-3-methylbutanoate + NADP(+) = (2S)-2-acetolactate + NADPH + H(+). It catalyses the reaction (2R,3R)-2,3-dihydroxy-3-methylpentanoate + NADP(+) = (S)-2-ethyl-2-hydroxy-3-oxobutanoate + NADPH + H(+). Its pathway is amino-acid biosynthesis; L-isoleucine biosynthesis; L-isoleucine from 2-oxobutanoate: step 2/4. It participates in amino-acid biosynthesis; L-valine biosynthesis; L-valine from pyruvate: step 2/4. Functionally, involved in the biosynthesis of branched-chain amino acids (BCAA). Catalyzes an alkyl-migration followed by a ketol-acid reduction of (S)-2-acetolactate (S2AL) to yield (R)-2,3-dihydroxy-isovalerate. In the isomerase reaction, S2AL is rearranged via a Mg-dependent methyl migration to produce 3-hydroxy-3-methyl-2-ketobutyrate (HMKB). In the reductase reaction, this 2-ketoacid undergoes a metal-dependent reduction by NADPH to yield (R)-2,3-dihydroxy-isovalerate. This is Ketol-acid reductoisomerase (NADP(+)) from Thiobacillus denitrificans (strain ATCC 25259 / T1).